A 375-amino-acid polypeptide reads, in one-letter code: MAQLCVALVAGEASGDILGSGLMRALKARHPQVRFIGVGGPLMEAEGMQSYFPMERLAVMGLVEVLGRLRELLKRRKALIQTLIAEKPDVFIGIDAPDFTLNIELKLRQAGIKTVHYVSPSVWAWRQKRVLKIREGCDLMLTLLPFEARFYEEQGVPVRFVGHPLADTIPLAADRQAARMALGLDAGPVVALMPGSRGGEVGRLGALFLDAAQRLVELIPGVHFVLPCANGARRAQLEQMLEGRELPLTLLDGQSHQALAACDAVLIASGTATLEAMLYKRPMVVAYRLAPLTYWILKRLVKSPYVSLPNLLAQRELVPELLQDAATSEALAQTLAPLVADGRQQTERFDEIHRTLRRDASNQAADAVLALLKDR.

Belongs to the LpxB family.

It carries out the reaction a lipid X + a UDP-2-N,3-O-bis[(3R)-3-hydroxyacyl]-alpha-D-glucosamine = a lipid A disaccharide + UDP + H(+). It participates in bacterial outer membrane biogenesis; LPS lipid A biosynthesis. Condensation of UDP-2,3-diacylglucosamine and 2,3-diacylglucosamine-1-phosphate to form lipid A disaccharide, a precursor of lipid A, a phosphorylated glycolipid that anchors the lipopolysaccharide to the outer membrane of the cell. This Pseudomonas putida (strain W619) protein is Lipid-A-disaccharide synthase.